The chain runs to 458 residues: ATP synthase subunit beta (458 aa).

ATP is bound at residue 148 to 155 (GGAGVGKT).

It belongs to the ATPase alpha/beta chains family. As to quaternary structure, F-type ATPases have 2 components, CF(1) - the catalytic core - and CF(0) - the membrane proton channel. CF(1) has five subunits: alpha(3), beta(3), gamma(1), delta(1), epsilon(1). CF(0) has three main subunits: a(1), b(2) and c(9-12). The alpha and beta chains form an alternating ring which encloses part of the gamma chain. CF(1) is attached to CF(0) by a central stalk formed by the gamma and epsilon chains, while a peripheral stalk is formed by the delta and b chains.

It localises to the cell inner membrane. The enzyme catalyses ATP + H2O + 4 H(+)(in) = ADP + phosphate + 5 H(+)(out). Functionally, produces ATP from ADP in the presence of a proton gradient across the membrane. The catalytic sites are hosted primarily by the beta subunits. This Pseudomonas fluorescens (strain Pf0-1) protein is ATP synthase subunit beta.